Reading from the N-terminus, the 296-residue chain is Phosphatidylserine decarboxylase proenzyme (296 aa).

Catalysis depends on charge relay system; for autoendoproteolytic cleavage activity residues aspartate 113, histidine 169, and serine 256. The active-site Schiff-base intermediate with substrate; via pyruvic acid; for decarboxylase activity is the serine 256. The residue at position 256 (serine 256) is a Pyruvic acid (Ser); by autocatalysis.

The protein belongs to the phosphatidylserine decarboxylase family. PSD-B subfamily. Prokaryotic type II sub-subfamily. Heterodimer of a large membrane-associated beta subunit and a small pyruvoyl-containing alpha subunit. The cofactor is pyruvate. In terms of processing, is synthesized initially as an inactive proenzyme. Formation of the active enzyme involves a self-maturation process in which the active site pyruvoyl group is generated from an internal serine residue via an autocatalytic post-translational modification. Two non-identical subunits are generated from the proenzyme in this reaction, and the pyruvate is formed at the N-terminus of the alpha chain, which is derived from the carboxyl end of the proenzyme. The autoendoproteolytic cleavage occurs by a canonical serine protease mechanism, in which the side chain hydroxyl group of the serine supplies its oxygen atom to form the C-terminus of the beta chain, while the remainder of the serine residue undergoes an oxidative deamination to produce ammonia and the pyruvoyl prosthetic group on the alpha chain. During this reaction, the Ser that is part of the protease active site of the proenzyme becomes the pyruvoyl prosthetic group, which constitutes an essential element of the active site of the mature decarboxylase.

Its subcellular location is the cell membrane. The enzyme catalyses a 1,2-diacyl-sn-glycero-3-phospho-L-serine + H(+) = a 1,2-diacyl-sn-glycero-3-phosphoethanolamine + CO2. It participates in phospholipid metabolism; phosphatidylethanolamine biosynthesis; phosphatidylethanolamine from CDP-diacylglycerol: step 2/2. Catalyzes the formation of phosphatidylethanolamine (PtdEtn) from phosphatidylserine (PtdSer). The sequence is that of Phosphatidylserine decarboxylase proenzyme from Clostridium kluyveri (strain ATCC 8527 / DSM 555 / NBRC 12016 / NCIMB 10680 / K1).